The following is a 131-amino-acid chain: Small ribosomal subunit protein uS11 (131 aa).

It belongs to the universal ribosomal protein uS11 family. Part of the 30S ribosomal subunit. Interacts with proteins S7 and S18. Binds to IF-3.

Its function is as follows. Located on the platform of the 30S subunit, it bridges several disparate RNA helices of the 16S rRNA. Forms part of the Shine-Dalgarno cleft in the 70S ribosome. The sequence is that of Small ribosomal subunit protein uS11 from Bacillus licheniformis (strain ATCC 14580 / DSM 13 / JCM 2505 / CCUG 7422 / NBRC 12200 / NCIMB 9375 / NCTC 10341 / NRRL NRS-1264 / Gibson 46).